A 443-amino-acid polypeptide reads, in one-letter code: Mitochondrial enolase superfamily member 1 (443 aa).

Substrate is bound by residues 24–26 (GSD) and Y34. The residue at position 148 (S148) is a Phosphoserine. Residue K220 coordinates substrate. The active-site Proton donor/acceptor is the K222. D250 lines the Mg(2+) pocket. Substrate-binding positions include N252, E276, E305, 355–357 (HAG), and E386. Mg(2+) contacts are provided by E276 and E305. H355 is a catalytic residue.

It belongs to the mandelate racemase/muconate lactonizing enzyme family. ENOSF1 subfamily. It depends on Mg(2+) as a cofactor. In terms of processing, could be sumoylated.

It localises to the mitochondrion. The enzyme catalyses L-fuconate = 2-dehydro-3-deoxy-L-fuconate + H2O. Its function is as follows. Plays a role in the catabolism of L-fucose, a sugar that is part of the carbohydrates that are attached to cellular glycoproteins. Catalyzes the dehydration of L-fuconate to 2-keto-3-deoxy-L-fuconate by the abstraction of the 2-proton to generate an enediolate intermediate that is stabilized by the magnesium ion. May down-regulate thymidylate synthase activity, possibly already at the RNA level, by promoting the degradation of TYMS mRNA via an antisense RNA-based mechanism. The protein is Mitochondrial enolase superfamily member 1 (ENOSF1) of Pongo abelii (Sumatran orangutan).